A 514-amino-acid chain; its full sequence is Protein nucleotidyltransferase YdiU (514 aa).

The ATP site is built by Gly90, Gly92, Arg93, Lys113, Asp125, Gly126, Arg176, and Arg183. The Proton acceptor role is filled by Asp267. The Mg(2+) site is built by Asn268 and Asp277. Position 277 (Asp277) interacts with ATP.

The protein belongs to the SELO family. Mg(2+) serves as cofactor. The cofactor is Mn(2+).

The enzyme catalyses L-seryl-[protein] + ATP = 3-O-(5'-adenylyl)-L-seryl-[protein] + diphosphate. The catalysed reaction is L-threonyl-[protein] + ATP = 3-O-(5'-adenylyl)-L-threonyl-[protein] + diphosphate. It catalyses the reaction L-tyrosyl-[protein] + ATP = O-(5'-adenylyl)-L-tyrosyl-[protein] + diphosphate. It carries out the reaction L-histidyl-[protein] + UTP = N(tele)-(5'-uridylyl)-L-histidyl-[protein] + diphosphate. The enzyme catalyses L-seryl-[protein] + UTP = O-(5'-uridylyl)-L-seryl-[protein] + diphosphate. The catalysed reaction is L-tyrosyl-[protein] + UTP = O-(5'-uridylyl)-L-tyrosyl-[protein] + diphosphate. Functionally, nucleotidyltransferase involved in the post-translational modification of proteins. It can catalyze the addition of adenosine monophosphate (AMP) or uridine monophosphate (UMP) to a protein, resulting in modifications known as AMPylation and UMPylation. The chain is Protein nucleotidyltransferase YdiU from Photobacterium profundum (strain SS9).